The sequence spans 400 residues: Large envelope protein (400 aa).

Residue Met-1 is modified to N-acetylmethionine. Disordered regions lie at residues 1–55 and 85–118; these read MGGW…WPEA and LTTV…SHPQ. Gly-2 is lipidated: N-myristoyl glycine; by host. The pre-S1 stretch occupies residues 2 to 119; the sequence is GGWSSKPRQG…PPLRDSHPQA (118 aa). The segment at 2-174 is pre-S; sequence GGWSSKPRQG…FSRTGDPAPN (173 aa). At 2-181 the chain is on the virion surface; in external conformation side; sequence GGWSSKPRQG…APNMESTTSG (180 aa). Over 2–253 the chain is Intravirion; in internal conformation; sequence GGWSSKPRQG…PGYRWMCLRR (252 aa). A glycan (N-linked (GlcNAc...) asparagine) is linked at Trp-4. A compositionally biased stretch (polar residues) spans 96 to 106; that stretch reads STNRQSGRQPT. The pre-S2 stretch occupies residues 120–174; that stretch reads MQWNSTTFHQALLDPRVKGLYFPAGGSSSGTVNPVPTTASPISSIFSRTGDPAPN. A helical transmembrane segment spans residues 182-202; the sequence is FLGPLLVLQAGFFLLTRILTI. Residues 203-253 lie on the Intravirion; in external conformation side of the membrane; it reads PQSLDSWWTSLNFLGGAPTCPGQNSQSPTSNHSPTSCPPICPGYRWMCLRR. A helical transmembrane segment spans residues 254-274; sequence FIIFLFILLLCLIFLLVLLDF. Over 275–348 the chain is Virion surface; the sequence is QGMLPVCPLL…WASVRFSWLS (74 aa). A glycan (N-linked (GlcNAc...) asparagine; by host) is linked at Asn-320. Residues 349-369 traverse the membrane as a helical segment; sequence LLVPFVQWFAGLSPTVWLSVI. Residues 370 to 375 lie on the Intravirion side of the membrane; that stretch reads WMMWYW. The helical transmembrane segment at 376–398 threads the bilayer; it reads GPSLYNILSPFLPLLPIFFCLWV. At 399-400 the chain is on the virion surface side; that stretch reads YI.

Belongs to the orthohepadnavirus major surface antigen family. As to quaternary structure, in its internal form (Li-HBsAg), interacts with the capsid protein and with the isoform S. Interacts with host chaperone CANX. In terms of assembly, associates with host chaperone CANX through its pre-S2 N glycan; this association may be essential for isoform M proper secretion. Interacts with isoform L. Interacts with the antigens of satellite virus HDV (HDVAgs); this interaction is required for encapsidation of HDV genomic RNA. Isoform M is N-terminally acetylated by host at a ratio of 90%, and N-glycosylated by host at the pre-S2 region. In terms of processing, myristoylated.

Its subcellular location is the virion membrane. The large envelope protein exists in two topological conformations, one which is termed 'external' or Le-HBsAg and the other 'internal' or Li-HBsAg. In its external conformation the protein attaches the virus to cell receptors and thereby initiating infection. This interaction determines the species specificity and liver tropism. This attachment induces virion internalization predominantly through caveolin-mediated endocytosis. The large envelope protein also assures fusion between virion membrane and endosomal membrane. In its internal conformation the protein plays a role in virion morphogenesis and mediates the contact with the nucleocapsid like a matrix protein. In terms of biological role, the middle envelope protein plays an important role in the budding of the virion. It is involved in the induction of budding in a nucleocapsid independent way. In this process the majority of envelope proteins bud to form subviral lipoprotein particles of 22 nm of diameter that do not contain a nucleocapsid. This Hepatitis B virus genotype C subtype ar (isolate Japan/S-207/1988) (HBV-C) protein is Large envelope protein.